A 176-amino-acid polypeptide reads, in one-letter code: Oleosin Ara h 14.0102 (176 aa).

Ala-2 is modified (N-acetylalanine; alternate). Helical transmembrane passes span Gly-61–Ala-81 and Phe-87–Leu-107. Positions Lys-156–Ser-176 are disordered.

Belongs to the oleosin family. As to quaternary structure, homodimer. Forms oligomers. In terms of tissue distribution, expressed in seeds (at protein level). Not expressed in leaves.

Its subcellular location is the lipid droplet. The protein localises to the membrane. In terms of biological role, may have a structural role to stabilize the lipid body during desiccation of the seed by preventing coalescence of the oil. Probably interacts with both lipid and phospholipid moieties of lipid bodies. May also provide recognition signals for specific lipase anchorage in lipolysis during seedling growth. This Arachis hypogaea (Peanut) protein is Oleosin Ara h 14.0102.